A 1017-amino-acid polypeptide reads, in one-letter code: Dopamine dehydroxylase (1017 aa).

Residues 1–34 (MGNLTMSRRTFVKTAAITGAAAAAFGASTHTALA) constitute a signal peptide (tat-type signal). One can recognise a 4Fe-4S Mo/W bis-MGD-type domain in the interval 45–103 (DTVAVKTCCRGCGKMECGVKVIVQNGRAIRVEGDEGAFQSMGNCCTKSQSSIQAAYHPD). Residues Cys-53, Cys-56, Cys-61, and Cys-89 each contribute to the [4Fe-4S] cluster site. Lys-91 functions as the Electron donor/acceptor in the catalytic mechanism.

This sequence belongs to the prokaryotic molybdopterin-containing oxidoreductase family. The cofactor is [4Fe-4S] cluster. Mo-bis(molybdopterin guanine dinucleotide) serves as cofactor. Post-translationally, predicted to be exported by the Tat system. The position of the signal peptide cleavage has not been experimentally proven.

It carries out the reaction dopamine + AH2 = 3-tyramine + A + H2O. Functionally, involved in drug metabolism, as part of an interspecies gut bacterial pathway for Levodopa (L-dopa) metabolism, acting on dopamine produced by Enterecoccus L-dopa decarboxylase. Removes the para hydroxyl group of dopamine to produce m-tyramine (3-tyramine). It is possible that dopamine dehydroxylation influences the multiple side effects of L-dopa administration linked to dopamine production in the treatment of Parkinson's disease. The chain is Dopamine dehydroxylase from Eggerthella lenta (Eubacterium lentum).